The sequence spans 329 residues: Ketol-acid reductoisomerase (NADP(+)) (329 aa).

A KARI N-terminal Rossmann domain is found at 1–181 (MKVYYEQDAN…GGTRSGVIET (181 aa)). Residues 24–27 (YGSQ), Arg47, and 82–85 (DQYQ) each bind NADP(+). The active site involves His107. NADP(+) is bound at residue Gly133. A KARI C-terminal knotted domain is found at 182-327 (TFREETETDL…ARLRSMMPWL (146 aa)). Mg(2+) is bound by residues Asp190, Glu194, Glu226, and Glu230. A substrate-binding site is contributed by Ser251.

This sequence belongs to the ketol-acid reductoisomerase family. Mg(2+) serves as cofactor.

The enzyme catalyses (2R)-2,3-dihydroxy-3-methylbutanoate + NADP(+) = (2S)-2-acetolactate + NADPH + H(+). It catalyses the reaction (2R,3R)-2,3-dihydroxy-3-methylpentanoate + NADP(+) = (S)-2-ethyl-2-hydroxy-3-oxobutanoate + NADPH + H(+). Its pathway is amino-acid biosynthesis; L-isoleucine biosynthesis; L-isoleucine from 2-oxobutanoate: step 2/4. It functions in the pathway amino-acid biosynthesis; L-valine biosynthesis; L-valine from pyruvate: step 2/4. Its function is as follows. Involved in the biosynthesis of branched-chain amino acids (BCAA). Catalyzes an alkyl-migration followed by a ketol-acid reduction of (S)-2-acetolactate (S2AL) to yield (R)-2,3-dihydroxy-isovalerate. In the isomerase reaction, S2AL is rearranged via a Mg-dependent methyl migration to produce 3-hydroxy-3-methyl-2-ketobutyrate (HMKB). In the reductase reaction, this 2-ketoacid undergoes a metal-dependent reduction by NADPH to yield (R)-2,3-dihydroxy-isovalerate. The protein is Ketol-acid reductoisomerase (NADP(+)) of Oleidesulfovibrio alaskensis (strain ATCC BAA-1058 / DSM 17464 / G20) (Desulfovibrio alaskensis).